The primary structure comprises 218 residues: MGQKINPLGFRLGVTQNHCSHWFAKPNNYYKLLEEDEKMRNCIYNYVRKHIKSSSNYGGIARIEIERKTDLIQIEIYTGFPALLVESRGRGIEELKADVQTVLNLGNRKLRMALTEVEEPYTEPNILAEYIALQLENRVAFRRTMKKAIELTRKTSVKGIKIQIAGRLNGAEIARVEWAREGRVPLQTIRAQINYCYYPAQTIYGVLGIKVWIFQTEE.

One can recognise a KH type-2 domain in the interval 47 to 118; the sequence is VRKHIKSSSN…KLRMALTEVE (72 aa).

Belongs to the universal ribosomal protein uS3 family. In terms of assembly, part of the 30S ribosomal subunit.

It is found in the plastid. The protein resides in the chloroplast. The polypeptide is Small ribosomal subunit protein uS3c (rps3) (Anthoceros angustus (Hornwort)).